The following is a 244-amino-acid chain: NAD-dependent protein deacetylase (244 aa).

The region spanning methionine 1–aspartate 244 is the Deacetylase sirtuin-type domain. NAD(+)-binding residues include alanine 24, threonine 28, phenylalanine 35, arginine 36, glutamine 105, isoleucine 107, aspartate 108, and histidine 123. A nicotinamide-binding site is contributed by phenylalanine 35. Nicotinamide is bound by residues isoleucine 107 and aspartate 108. Histidine 123 (proton acceptor) is an active-site residue. The Zn(2+) site is built by cysteine 131, cysteine 134, cysteine 152, and cysteine 155. NAD(+) is bound by residues threonine 193, serine 194, asparagine 217, and isoleucine 235.

This sequence belongs to the sirtuin family. Class U subfamily. Zn(2+) is required as a cofactor.

Its subcellular location is the cytoplasm. It carries out the reaction N(6)-acetyl-L-lysyl-[protein] + NAD(+) + H2O = 2''-O-acetyl-ADP-D-ribose + nicotinamide + L-lysyl-[protein]. Its function is as follows. NAD-dependent protein deacetylase which modulates the activities of several enzymes which are inactive in their acetylated form. The protein is NAD-dependent protein deacetylase of Clostridium perfringens (strain 13 / Type A).